Here is a 645-residue protein sequence, read N- to C-terminus: 1,4-alpha-glucan branching enzyme GlgB (645 aa).

The active-site Nucleophile is the aspartate 309. Glutamate 352 acts as the Proton donor in catalysis. A disordered region spans residues valine 619–arginine 645. The segment covering arginine 636–arginine 645 has biased composition (polar residues).

This sequence belongs to the glycosyl hydrolase 13 family. GlgB subfamily. Monomer.

It carries out the reaction Transfers a segment of a (1-&gt;4)-alpha-D-glucan chain to a primary hydroxy group in a similar glucan chain.. It functions in the pathway glycan biosynthesis; glycogen biosynthesis. Catalyzes the formation of the alpha-1,6-glucosidic linkages in glycogen by scission of a 1,4-alpha-linked oligosaccharide from growing alpha-1,4-glucan chains and the subsequent attachment of the oligosaccharide to the alpha-1,6 position. This Bacillus cereus (strain ATCC 10987 / NRS 248) protein is 1,4-alpha-glucan branching enzyme GlgB.